Consider the following 253-residue polypeptide: E3 ubiquitin-protein ligase MARCHF3 (253 aa).

The RING-CH-type zinc-finger motif lies at 63–123 (SPFNDRPMCR…ELCHFRFAVE (61 aa)). The Zn(2+) site is built by Cys-71, Cys-74, Cys-87, Cys-89, His-97, Cys-100, Cys-113, and Cys-116. A run of 2 helical transmembrane segments spans residues 145-165 (LFGD…SGWL) and 182-202 (AVGL…WTLV). Ser-237 and Ser-243 each carry phosphoserine.

Interacts with MARCHF2 and STX6. As to expression, expressed predominantly in lung, colon and spleen. Present in liver (at protein level).

It is found in the cytoplasmic vesicle membrane. The protein resides in the early endosome membrane. The enzyme catalyses S-ubiquitinyl-[E2 ubiquitin-conjugating enzyme]-L-cysteine + [acceptor protein]-L-lysine = [E2 ubiquitin-conjugating enzyme]-L-cysteine + N(6)-ubiquitinyl-[acceptor protein]-L-lysine.. It functions in the pathway protein modification; protein ubiquitination. Its function is as follows. E3 ubiquitin-protein ligase which may be involved in endosomal trafficking. E3 ubiquitin ligases accept ubiquitin from an E2 ubiquitin-conjugating enzyme in the form of a thioester and then directly transfer the ubiquitin to targeted substrates. This chain is E3 ubiquitin-protein ligase MARCHF3 (Marchf3), found in Rattus norvegicus (Rat).